Here is a 422-residue protein sequence, read N- to C-terminus: Serine hydroxymethyltransferase (422 aa).

Residues Leu121 and 125–127 (GHL) contribute to the (6S)-5,6,7,8-tetrahydrofolate site. Lys230 bears the N6-(pyridoxal phosphate)lysine mark. (6S)-5,6,7,8-tetrahydrofolate is bound at residue 355-357 (SPF).

The protein belongs to the SHMT family. In terms of assembly, homodimer. It depends on pyridoxal 5'-phosphate as a cofactor.

It localises to the cytoplasm. It carries out the reaction (6R)-5,10-methylene-5,6,7,8-tetrahydrofolate + glycine + H2O = (6S)-5,6,7,8-tetrahydrofolate + L-serine. The protein operates within one-carbon metabolism; tetrahydrofolate interconversion. Its pathway is amino-acid biosynthesis; glycine biosynthesis; glycine from L-serine: step 1/1. In terms of biological role, catalyzes the reversible interconversion of serine and glycine with tetrahydrofolate (THF) serving as the one-carbon carrier. This reaction serves as the major source of one-carbon groups required for the biosynthesis of purines, thymidylate, methionine, and other important biomolecules. Also exhibits THF-independent aldolase activity toward beta-hydroxyamino acids, producing glycine and aldehydes, via a retro-aldol mechanism. In Teredinibacter turnerae (strain ATCC 39867 / T7901), this protein is Serine hydroxymethyltransferase.